We begin with the raw amino-acid sequence, 226 residues long: ATP synthase F(0) complex subunit a (226 aa).

The next 6 helical transmembrane spans lie at 6–26 (FASFITPVILGLPLVTLIVLF), 68–88 (WALMLMSLILFIGSTNLLGLL), 97–117 (QLSMNLGMAIPLWAGAVITGF), 138–158 (IPMLVIIETISLFIQPVALAV), 164–184 (ITAGHLLIHLIGGATLALMSI), and 189–209 (ALITFTILILLTILEFAVAMI).

The protein belongs to the ATPase A chain family. In terms of assembly, component of the ATP synthase complex composed at least of ATP5F1A/subunit alpha, ATP5F1B/subunit beta, ATP5MC1/subunit c (homooctomer), MT-ATP6/subunit a, MT-ATP8/subunit 8, ATP5ME/subunit e, ATP5MF/subunit f, ATP5MG/subunit g, ATP5MK/subunit k, ATP5MJ/subunit j, ATP5F1C/subunit gamma, ATP5F1D/subunit delta, ATP5F1E/subunit epsilon, ATP5PF/subunit F6, ATP5PB/subunit b, ATP5PD/subunit d, ATP5PO/subunit OSCP. ATP synthase complex consists of a soluble F(1) head domain (subunits alpha(3) and beta(3)) - the catalytic core - and a membrane F(0) domain - the membrane proton channel (subunits c, a, 8, e, f, g, k and j). These two domains are linked by a central stalk (subunits gamma, delta, and epsilon) rotating inside the F1 region and a stationary peripheral stalk (subunits F6, b, d, and OSCP). Interacts with DNAJC30; interaction is direct.

The protein localises to the mitochondrion inner membrane. The catalysed reaction is H(+)(in) = H(+)(out). Subunit a, of the mitochondrial membrane ATP synthase complex (F(1)F(0) ATP synthase or Complex V) that produces ATP from ADP in the presence of a proton gradient across the membrane which is generated by electron transport complexes of the respiratory chain. ATP synthase complex consist of a soluble F(1) head domain - the catalytic core - and a membrane F(1) domain - the membrane proton channel. These two domains are linked by a central stalk rotating inside the F(1) region and a stationary peripheral stalk. During catalysis, ATP synthesis in the catalytic domain of F(1) is coupled via a rotary mechanism of the central stalk subunits to proton translocation. With the subunit c (ATP5MC1), forms the proton-conducting channel in the F(0) domain, that contains two crucial half-channels (inlet and outlet) that facilitate proton movement from the mitochondrial intermembrane space (IMS) into the matrix. Protons are taken up via the inlet half-channel and released through the outlet half-channel, following a Grotthuss mechanism. The sequence is that of ATP synthase F(0) complex subunit a from Bos indicus (Zebu).